A 328-amino-acid polypeptide reads, in one-letter code: UPF0285 protein Mevan_1551 (328 aa).

Belongs to the UPF0285 family.

The chain is UPF0285 protein Mevan_1551 from Methanococcus vannielii (strain ATCC 35089 / DSM 1224 / JCM 13029 / OCM 148 / SB).